Reading from the N-terminus, the 179-residue chain is Ribulose bisphosphate carboxylase small subunit, chloroplastic 1/4 (179 aa).

The transit peptide at 1 to 58 (MAASSTMLSSVATAACAAPAQASMVAPFVGLKSTSAFPVTQKPATGLSTLPSNGGRVQ) directs the protein to the chloroplast.

Belongs to the RuBisCO small chain family. As to quaternary structure, heterohexadecamer of 8 large and 8 small subunits.

The protein resides in the plastid. It localises to the chloroplast. Functionally, ruBisCO catalyzes two reactions: the carboxylation of D-ribulose 1,5-bisphosphate, the primary event in carbon dioxide fixation, as well as the oxidative fragmentation of the pentose substrate. Both reactions occur simultaneously and in competition at the same active site. Although the small subunit is not catalytic it is essential for maximal activity. The sequence is that of Ribulose bisphosphate carboxylase small subunit, chloroplastic 1/4 (RBCS1) from Fritillaria agrestis (Stinkbells).